We begin with the raw amino-acid sequence, 423 residues long: FAD-dependent monooxygenase asL6 (423 aa).

FAD-binding positions include 10–13 (AGVA), 34–35 (ER), arginine 108, tyrosine 290, and aspartate 312. A helical transmembrane segment spans residues 371–391 (GMGMFQSKFGVGVFYVLLAII).

The protein belongs to the aromatic-ring hydroxylase family. Requires FAD as cofactor.

The protein resides in the membrane. It participates in secondary metabolite biosynthesis; terpenoid biosynthesis. Functionally, FAD-dependent monooxygenase; part of the gene cluster that mediates the biosynthesis of xenovulene A, an unusual meroterpenoid that has potent inhibitory effects on the human gamma-aminobutyrate A (GABAA) benzodiazepine receptor. The first step of xenovulene A biosynthesis is the biosynthesis of 3-methylorcinaldehyde performed by the non-reducing polyketide synthase aspks1. The salicylate hydroxylase asL1 then catalyzes the oxidative dearomatization of 3-methylorcinaldehyde to yield a dearomatized hydroxycyclohexadione. The 2-oxoglutarate-dependent dioxygenase asL3 further catalyzes the oxidative ring expansion to provide the first tropolone metabolite. The cytochrome P450 monooxygenase asR2 allows the synthesis of tropolone hemiacetal. In parallel, a previously unrecognised class of terpene cyclase, asR6, produces alpha-humulene from farnesylpyrophosphate (FPP). The putative Diels-Alderase asR5 probably catalyzes the formation of the tropolone-humulene skeleton by linking humulene and the polyketide moiety. Oxidative-ring contractions catalyzed by asL4 and asL6 then processively remove carbon atoms from the polyketide to yield xenovulene A. The protein is FAD-dependent monooxygenase asL6 of Sarocladium schorii (Acremonium strictum (strain IMI 501407)).